We begin with the raw amino-acid sequence, 421 residues long: MDLETKVKKMGLGHEQGFGAPCLKCKEKCEGFELHFWRKICRNCKCGQEEHDILLSNEEDRKVGKLFEDTKYTTLIAKLKSDGIPMYKRNVMILTNPVAARKNVSINTVTYEWAPPVQNQALARQYMQMLPKDKQPVAGSEGAQYRKKQLAKQLPAHDQDPSKCHELSPKEVKEMEQFVKKYKNEALGVGDVKLPCELDARGPNQMYIPGGDRSTSAAVGAMEDKSAEHKNTQYSCYCCKMSMKEGDPAIYAERAGYDKLWHPACFVCSICYELLVDMIYFWKDEKLYCGRHYCDSEKPRCAGCDELIFSNEYTQAENQNWHLKHFCCFDCDNILAGEIYVMVNDKPVCKPCYVKNHAVVCQGCHNAIDPEVQRVTYNNFSWHASTECFLCSCCSKCLIGQKFMPVEGMVFCSVECKKMMS.

The 108-residue stretch at M92–D199 folds into the PET domain. The segment at K134 to C164 is disordered. The span at P155 to C164 shows a compositional bias: basic and acidic residues. LIM zinc-binding domains are found at residues Y234 to E297, P299 to V359, and Q362 to S421.

The protein belongs to the prickle / espinas / testin family. In terms of assembly, interacts via LIM domain 1 with ZYX. Interacts (via LIM domain 3) with ENAH and VASP. Interacts with ALKBH4, talin, actin, alpha-actinin, GRIP1 and PXN. Interacts (via LIM domain 2) with ACTL7A (via N-terminus). Heterodimer with ACTL7A; the heterodimer interacts with ENAH to form a heterotrimer.

Its subcellular location is the cytoplasm. It is found in the cell junction. The protein localises to the focal adhesion. In terms of biological role, scaffold protein that may play a role in cell adhesion, cell spreading and in the reorganization of the actin cytoskeleton. Plays a role in the regulation of cell proliferation. May act as a tumor suppressor. The sequence is that of Testin (TES) from Eulemur macaco macaco (Black lemur).